The sequence spans 345 residues: Protein RecA (345 aa).

65-72 serves as a coordination point for ATP; the sequence is GPESSGKT.

Belongs to the RecA family.

The protein localises to the cytoplasm. Can catalyze the hydrolysis of ATP in the presence of single-stranded DNA, the ATP-dependent uptake of single-stranded DNA by duplex DNA, and the ATP-dependent hybridization of homologous single-stranded DNAs. It interacts with LexA causing its activation and leading to its autocatalytic cleavage. In Hahella chejuensis (strain KCTC 2396), this protein is Protein RecA.